We begin with the raw amino-acid sequence, 495 residues long: MFPSSDFSFSPSSLFSAYASLTGFLMLFRSMLHDFVPEKLRSYFSSLLDRFFTPKSKYLTVIIDENFGLNRNQVFDAAEMYLRSKIGPETERLRVGKIPKQKHFTISIERGEEILDTFEESEVKWSYVQSENEKGDKVKRYYELTFEKKLRDKVLNSYLTHVVAESEEIKRNLRVVKLYSRDVYASDDDDGMAGGNWGCINLEHPSTFDTLAMDPNAKKKIIDDLERFLKRKEFYKRVGKAWKRGYLLYGPPGTGKSSLIAAMANYLKFDVFDLELSSIYDNGELKRVLLSTTNRSILVIEDIDCNAEVRDREAENQEDEQIKGKVTLSGILNFIDGLWSSFGDERIIVFTTNHKERLDPALLRPGRMDVHINMSYCTGLGFRTLVSNYLGLDGLNHPLCEEIEALVDSTEVTPAELAEELMQDDDTDVVLRGVISFVEKRKVERSKTKKEVSICKATDDDEKQNGSLGCVKKKKKGGKQKGKGKGKGKAKTYLI.

A helical transmembrane segment spans residues 7-28 (FSFSPSSLFSAYASLTGFLMLF). Residue 250–257 (GPPGTGKS) coordinates ATP. Residues 451–495 (EVSICKATDDDEKQNGSLGCVKKKKKGGKQKGKGKGKGKAKTYLI) form a disordered region. Residues 471 to 495 (VKKKKKGGKQKGKGKGKGKAKTYLI) are compositionally biased toward basic residues.

This sequence belongs to the AAA ATPase family. BCS1 subfamily. Requires Mg(2+) as cofactor.

It localises to the membrane. The catalysed reaction is ATP + H2O = ADP + phosphate + H(+). This is AAA-ATPase At2g18193 from Arabidopsis thaliana (Mouse-ear cress).